The chain runs to 377 residues: Homoserine O-acetyltransferase (377 aa).

The 300-residue stretch at 48–347 (NVVLIEHALT…PVGHDAFLTE (300 aa)) folds into the AB hydrolase-1 domain. S143 functions as the Nucleophile in the catalytic mechanism. Residue R213 participates in substrate binding. Catalysis depends on residues D311 and H341. D342 is a substrate binding site.

It belongs to the AB hydrolase superfamily. MetX family. As to quaternary structure, homodimer.

The protein resides in the cytoplasm. The enzyme catalyses L-homoserine + acetyl-CoA = O-acetyl-L-homoserine + CoA. Its pathway is amino-acid biosynthesis; L-methionine biosynthesis via de novo pathway; O-acetyl-L-homoserine from L-homoserine: step 1/1. Its function is as follows. Transfers an acetyl group from acetyl-CoA to L-homoserine, forming acetyl-L-homoserine. The chain is Homoserine O-acetyltransferase from Corynebacterium glutamicum (strain ATCC 13032 / DSM 20300 / JCM 1318 / BCRC 11384 / CCUG 27702 / LMG 3730 / NBRC 12168 / NCIMB 10025 / NRRL B-2784 / 534).